The sequence spans 177 residues: Shikimate kinase (177 aa).

14–19 is a binding site for ATP; the sequence is GSGKST. Ser-18 is a Mg(2+) binding site. Residues Asp-36, Arg-60, and Gly-82 each coordinate substrate. Arg-120 contributes to the ATP binding site. Residue Arg-139 participates in substrate binding.

It belongs to the shikimate kinase family. Monomer. The cofactor is Mg(2+).

The protein localises to the cytoplasm. The enzyme catalyses shikimate + ATP = 3-phosphoshikimate + ADP + H(+). Its pathway is metabolic intermediate biosynthesis; chorismate biosynthesis; chorismate from D-erythrose 4-phosphate and phosphoenolpyruvate: step 5/7. In terms of biological role, catalyzes the specific phosphorylation of the 3-hydroxyl group of shikimic acid using ATP as a cosubstrate. This Gloeobacter violaceus (strain ATCC 29082 / PCC 7421) protein is Shikimate kinase.